The primary structure comprises 322 residues: Beta-ketoacyl-[acyl-carrier-protein] synthase III (322 aa).

Residues Cys113 and His249 contribute to the active site. Residues 250-254 are ACP-binding; that stretch reads QANIR. Residue Asn279 is part of the active site.

Belongs to the thiolase-like superfamily. FabH family. As to quaternary structure, homodimer.

The protein localises to the cytoplasm. It catalyses the reaction malonyl-[ACP] + acetyl-CoA + H(+) = 3-oxobutanoyl-[ACP] + CO2 + CoA. It participates in lipid metabolism; fatty acid biosynthesis. Catalyzes the condensation reaction of fatty acid synthesis by the addition to an acyl acceptor of two carbons from malonyl-ACP. Catalyzes the first condensation reaction which initiates fatty acid synthesis and may therefore play a role in governing the total rate of fatty acid production. Possesses both acetoacetyl-ACP synthase and acetyl transacylase activities. Its substrate specificity determines the biosynthesis of branched-chain and/or straight-chain of fatty acids. The polypeptide is Beta-ketoacyl-[acyl-carrier-protein] synthase III (Thioalkalivibrio sulfidiphilus (strain HL-EbGR7)).